Here is a 299-residue protein sequence, read N- to C-terminus: MWFKNLKIYRLSAPWALNGDQLEECLARFAYQGGNNLEMQSLGWISPRENGLLAHTLNGQILLTLRAEKKLLPTTVVNQVAKARAQEIEEQQGYKPGRKQMKEIKERVTDELLPKAFSIYRDTRVWIDTVNHWLVIDAAASAKADEVIGLLVKTIDPLPLDNLYVEQSPAAAMTGWLAADEAPANFSIDQDTELRASGESRAAIRYVKHSIDVDDVRRHIQSGKQCTRLAMTWADRVSFVLTESLDVKRVAPLDVLKENPDAATQNDDEKFDSDMTLMTGEVAKLLAELVDSLGGEKRV.

The protein belongs to the RdgC family.

It is found in the cytoplasm. The protein localises to the nucleoid. In terms of biological role, may be involved in recombination. This is Recombination-associated protein RdgC from Bordetella bronchiseptica (strain ATCC BAA-588 / NCTC 13252 / RB50) (Alcaligenes bronchisepticus).